The primary structure comprises 154 residues: Major allergen Dau c 1 (154 aa).

Belongs to the BetVI family. Homodimer.

The chain is Major allergen Dau c 1 from Daucus carota (Wild carrot).